Consider the following 444-residue polypeptide: ATP-dependent protease ATPase subunit HslU (444 aa).

Residues I20 and 62 to 67 (GVGKTE) each bind ATP. The tract at residues 130 to 158 (EDRILDALVPPPRGASGEPERGEDNSARQ) is disordered. Residues D257, E322, and R394 each contribute to the ATP site.

This sequence belongs to the ClpX chaperone family. HslU subfamily. A double ring-shaped homohexamer of HslV is capped on each side by a ring-shaped HslU homohexamer. The assembly of the HslU/HslV complex is dependent on binding of ATP.

The protein localises to the cytoplasm. Its function is as follows. ATPase subunit of a proteasome-like degradation complex; this subunit has chaperone activity. The binding of ATP and its subsequent hydrolysis by HslU are essential for unfolding of protein substrates subsequently hydrolyzed by HslV. HslU recognizes the N-terminal part of its protein substrates and unfolds these before they are guided to HslV for hydrolysis. This Bordetella pertussis (strain Tohama I / ATCC BAA-589 / NCTC 13251) protein is ATP-dependent protease ATPase subunit HslU.